The sequence spans 311 residues: Ornithine carbamoyltransferase (311 aa).

Carbamoyl phosphate-binding positions include 56-59 (STRT), Q83, R107, and 134-137 (HPTQ). L-ornithine is bound by residues N166, D230, and 234–235 (SM). Residues 270 to 271 (CL) and K298 each bind carbamoyl phosphate.

The protein belongs to the aspartate/ornithine carbamoyltransferase superfamily. OTCase family.

The protein localises to the cytoplasm. The enzyme catalyses carbamoyl phosphate + L-ornithine = L-citrulline + phosphate + H(+). Its pathway is amino-acid degradation; L-arginine degradation via ADI pathway; carbamoyl phosphate from L-arginine: step 2/2. Its function is as follows. Reversibly catalyzes the transfer of the carbamoyl group from carbamoyl phosphate (CP) to the N(epsilon) atom of ornithine (ORN) to produce L-citrulline. This chain is Ornithine carbamoyltransferase, found in Ignicoccus hospitalis (strain KIN4/I / DSM 18386 / JCM 14125).